The following is a 414-amino-acid chain: Probable mannose-1-phosphate guanyltransferase (414 aa).

This sequence belongs to the transferase hexapeptide repeat family.

Its subcellular location is the cytoplasm. It localises to the nucleus. It carries out the reaction alpha-D-mannose 1-phosphate + GTP + H(+) = GDP-alpha-D-mannose + diphosphate. The protein operates within nucleotide-sugar biosynthesis; GDP-alpha-D-mannose biosynthesis; GDP-alpha-D-mannose from alpha-D-mannose 1-phosphate (GTP route): step 1/1. In terms of biological role, involved in cell wall synthesis where it is required for glycosylation. The protein is Probable mannose-1-phosphate guanyltransferase of Schizosaccharomyces pombe (strain 972 / ATCC 24843) (Fission yeast).